Consider the following 532-residue polypeptide: Fatty-acid amide hydrolase 2 (532 aa).

Residues Leu-11–Leu-31 traverse the membrane as a helical segment. Residues Lys-131 and Ser-206 each act as charge relay system in the active site. Catalysis depends on Ser-230, which acts as the Acyl-ester intermediate.

The protein belongs to the amidase family. As to quaternary structure, homodimer. In terms of tissue distribution, expressed in kidney, liver, lung, prostate, heart and ovary.

It is found in the membrane. The protein localises to the lipid droplet. The catalysed reaction is N-(5Z,8Z,11Z,14Z-eicosatetraenoyl)-ethanolamine + H2O = ethanolamine + (5Z,8Z,11Z,14Z)-eicosatetraenoate. The enzyme catalyses (9Z)-octadecenamide + H2O = (9Z)-octadecenoate + NH4(+). It carries out the reaction N-(9Z-octadecenoyl) ethanolamine + H2O = ethanolamine + (9Z)-octadecenoate. It catalyses the reaction N-hexadecanoylethanolamine + H2O = ethanolamine + hexadecanoate. With respect to regulation, inhibited by O-aryl carbamates and alpha-keto heterocytes. Catalyzes the hydrolysis of endogenous amidated lipids like the sleep-inducing lipid oleamide ((9Z)-octadecenamide), the endocannabinoid anandamide (N-(5Z,8Z,11Z,14Z-eicosatetraenoyl)-ethanolamine), as well as other fatty amides, to their corresponding fatty acids, thereby regulating the signaling functions of these molecules. Hydrolyzes monounsaturated substrate anandamide preferentially as compared to polyunsaturated substrates. This is Fatty-acid amide hydrolase 2 (FAAH2) from Homo sapiens (Human).